A 44-amino-acid polypeptide reads, in one-letter code: Thymosin beta-10 (44 aa).

Basic and acidic residues-rich tracts occupy residues 1 to 25 (MADK…ETQE) and 33 to 44 (ETIEQEKRSEIS). Residues 1-44 (MADKPDMGEIASFDKAKLKKTETQEKNTLPTKETIEQEKRSEIS) form a disordered region. Position 2 is an N-acetylalanine (A2). The residue at position 4 (K4) is an N6-acetyllysine. Residue S12 is modified to Phosphoserine. Residue K15 is modified to N6-acetyllysine. A phosphothreonine mark is found at T21, T23, and T34. The residue at position 39 (K39) is an N6-acetyllysine. S41 is modified (phosphoserine).

Belongs to the thymosin beta family.

It localises to the cytoplasm. It is found in the cytoskeleton. In terms of biological role, plays an important role in the organization of the cytoskeleton. Binds to and sequesters actin monomers (G actin) and therefore inhibits actin polymerization. In Rattus norvegicus (Rat), this protein is Thymosin beta-10 (Tmsb10).